The chain runs to 696 residues: Caprolactamase subunit alpha (696 aa).

It belongs to the HyuA family. As to quaternary structure, the caprolactamase is a heterotetramer composed of two alpha subunits (CapA) and two beta subunits (CapB).

Activity is dependent on the presence of ATP and bicarbonate. The requirement for bicarbonate may be related to allosteric activation through conformational effects, but it is also conceivable that carboxyphosphate is formed and acts as a mediator in caprolactam activation, forming carboxy- or phospholactim. Its function is as follows. Component of a caprolactamase involved in the degradation of caprolactam, an industrial compound mainly used in the production of Nylon 6. Catalyzes the ATP-dependent hydrolysis of the caprolactam ring to form 6-aminocaproic acid (6-ACA). The alpha subunit is responsible for ATP-dependent substrate phosphorylation. The enzyme cannot use 5-oxoproline. This Pseudomonas jessenii protein is Caprolactamase subunit alpha.